The primary structure comprises 616 residues: Sulfite reductase [NADPH] hemoprotein beta-component (616 aa).

The span at methionine 1–alanine 10 shows a compositional bias: basic and acidic residues. Residues methionine 1 to isoleucine 35 are disordered. The segment covering glutamate 11–alanine 22 has biased composition (low complexity). [4Fe-4S] cluster is bound by residues cysteine 470, cysteine 476, cysteine 515, and cysteine 519. Residue cysteine 519 participates in siroheme binding.

This sequence belongs to the nitrite and sulfite reductase 4Fe-4S domain family. As to quaternary structure, alpha(8)-beta(8). The alpha component is a flavoprotein, the beta component is a hemoprotein. The cofactor is siroheme. It depends on [4Fe-4S] cluster as a cofactor.

It carries out the reaction hydrogen sulfide + 3 NADP(+) + 3 H2O = sulfite + 3 NADPH + 4 H(+). It functions in the pathway sulfur metabolism; hydrogen sulfide biosynthesis; hydrogen sulfide from sulfite (NADPH route): step 1/1. Functionally, component of the sulfite reductase complex that catalyzes the 6-electron reduction of sulfite to sulfide. This is one of several activities required for the biosynthesis of L-cysteine from sulfate. The chain is Sulfite reductase [NADPH] hemoprotein beta-component from Methylobacterium radiotolerans (strain ATCC 27329 / DSM 1819 / JCM 2831 / NBRC 15690 / NCIMB 10815 / 0-1).